The following is a 358-amino-acid chain: Methylthioribose-1-phosphate isomerase (358 aa).

Residues 54-56, Arg-96, and Gln-205 contribute to the substrate site; that span reads RGA. The active-site Proton donor is the Asp-246. 256 to 257 is a binding site for substrate; that stretch reads NK.

It belongs to the eIF-2B alpha/beta/delta subunits family. MtnA subfamily.

The enzyme catalyses 5-(methylsulfanyl)-alpha-D-ribose 1-phosphate = 5-(methylsulfanyl)-D-ribulose 1-phosphate. It participates in amino-acid biosynthesis; L-methionine biosynthesis via salvage pathway; L-methionine from S-methyl-5-thio-alpha-D-ribose 1-phosphate: step 1/6. Its function is as follows. Catalyzes the interconversion of methylthioribose-1-phosphate (MTR-1-P) into methylthioribulose-1-phosphate (MTRu-1-P). The protein is Methylthioribose-1-phosphate isomerase of Pseudomonas paraeruginosa (strain DSM 24068 / PA7) (Pseudomonas aeruginosa (strain PA7)).